The primary structure comprises 180 residues: Flavodoxin B (180 aa).

Residues 4–173 (IGLFFGSNTG…RVAAWLAQIA (170 aa)) form the Flavodoxin-like domain.

Belongs to the flavodoxin family. Requires FMN as cofactor.

Functionally, low-potential electron donor to a number of redox enzymes. NifF is the electron donor to nitrogenase. The protein is Flavodoxin B (nifF) of Azotobacter chroococcum mcd 1.